Reading from the N-terminus, the 83-residue chain is Small ribosomal subunit protein bS16 (83 aa).

This sequence belongs to the bacterial ribosomal protein bS16 family.

This Pseudoalteromonas atlantica (strain T6c / ATCC BAA-1087) protein is Small ribosomal subunit protein bS16.